Here is a 131-residue protein sequence, read N- to C-terminus: MAEAKGTASIQFFRGVDEPVVPDIRLTRSRDGRTGQATFVFEQPQALAPETFGNIGGMWMVDEEGEMVTREVNGKFVNGIPSALEATYTWKTEEDFERFMRFAQRYADSNGLGYSQNQKSDQTDAATEEQA.

Residues 110-131 are disordered; the sequence is NGLGYSQNQKSDQTDAATEEQA. A compositionally biased stretch (polar residues) spans 112-125; that stretch reads LGYSQNQKSDQTDA.

This sequence belongs to the Psb28 family. As to quaternary structure, part of the photosystem II complex.

It localises to the cellular thylakoid membrane. The sequence is that of Photosystem II reaction center Psb28 protein from Synechococcus sp. (strain CC9902).